A 230-amino-acid chain; its full sequence is MQEKIRRKSSQPVYLYGMKNMLRIGNKLYTRTSKNKKVYGEDIIRFEHANYREWRPDRSKLAAAILKGLHNMPIGESSSILYLGASTGTTVSHVSDIAPSGRIYAVEVAYEPFSKLLDLAEQRDNIYPILEDANLPERYRFFVDHVDVIYQDISQRNQIAIFKRNMDEFQPRSAFLVLKTRSIASTEDAKTILRKTIEQLSSYNIREVIDLSPYDTDHYLILVDAKGVRR.

S-adenosyl-L-methionine-binding positions include 89-90 (TT), 107-108 (EV), 132-133 (DA), and 152-155 (DISQ).

Belongs to the methyltransferase superfamily. Fibrillarin family. Interacts with nop5. Component of box C/D small ribonucleoprotein (sRNP) particles that contain rpl7ae, FlpA and nop5, plus a guide RNA.

Functionally, involved in pre-rRNA and tRNA processing. Utilizes the methyl donor S-adenosyl-L-methionine to catalyze the site-specific 2'-hydroxyl methylation of ribose moieties in rRNA and tRNA. Site specificity is provided by a guide RNA that base pairs with the substrate. Methylation occurs at a characteristic distance from the sequence involved in base pairing with the guide RNA. The polypeptide is Fibrillarin-like rRNA/tRNA 2'-O-methyltransferase (Thermoplasma acidophilum (strain ATCC 25905 / DSM 1728 / JCM 9062 / NBRC 15155 / AMRC-C165)).